The primary structure comprises 354 residues: Guanine nucleotide-binding protein G(o) subunit alpha (354 aa).

G2 is lipidated: N-myristoyl glycine. C3 carries S-palmitoyl cysteine lipidation. The 323-residue stretch at 32–354 folds into the G-alpha domain; the sequence is KDIKLLLLGA…ANNLRGCGLY (323 aa). The tract at residues 35 to 48 is G1 motif; the sequence is KLLLLGAGESGKST. GTP is bound by residues 40–47, 176–182, 201–205, 270–273, and A326; these read GAGESGKS, LRTRVKT, DVGGQ, and NKKD. The Mg(2+) site is built by S47 and T182. The G2 motif stretch occupies residues 174 to 182; that stretch reads DILRTRVKT. Residues 197–206 are G3 motif; that stretch reads FKLFDVGGQR. The tract at residues 266–273 is G4 motif; it reads ILFLNKKD. The tract at residues 324-329 is G5 motif; that stretch reads TCATDT.

This sequence belongs to the G-alpha family. G(i/o/t/z) subfamily. G proteins are composed of 3 units; alpha, beta and gamma. The alpha chain contains the guanine nucleotide binding site.

In terms of biological role, guanine nucleotide-binding proteins (G proteins) are involved as modulators or transducers in various transmembrane signaling systems. The G(o) protein function is not clear. This chain is Guanine nucleotide-binding protein G(o) subunit alpha, found in Lymnaea stagnalis (Great pond snail).